A 689-amino-acid polypeptide reads, in one-letter code: Glycine--tRNA ligase beta subunit (689 aa).

Belongs to the class-II aminoacyl-tRNA synthetase family. As to quaternary structure, tetramer of two alpha and two beta subunits.

It localises to the cytoplasm. The enzyme catalyses tRNA(Gly) + glycine + ATP = glycyl-tRNA(Gly) + AMP + diphosphate. The polypeptide is Glycine--tRNA ligase beta subunit (Shewanella baltica (strain OS223)).